Reading from the N-terminus, the 268-residue chain is 4-hydroxy-tetrahydrodipicolinate reductase (268 aa).

NAD(+) contacts are provided by residues glycine 9–methionine 14, glutamate 35, glycine 99–threonine 101, and alanine 123–tyrosine 126. Catalysis depends on histidine 156, which acts as the Proton donor/acceptor. Histidine 157 is a binding site for (S)-2,3,4,5-tetrahydrodipicolinate. Catalysis depends on lysine 160, which acts as the Proton donor. (S)-2,3,4,5-tetrahydrodipicolinate is bound at residue glycine 166–threonine 167.

It belongs to the DapB family.

The protein localises to the cytoplasm. It carries out the reaction (S)-2,3,4,5-tetrahydrodipicolinate + NAD(+) + H2O = (2S,4S)-4-hydroxy-2,3,4,5-tetrahydrodipicolinate + NADH + H(+). The enzyme catalyses (S)-2,3,4,5-tetrahydrodipicolinate + NADP(+) + H2O = (2S,4S)-4-hydroxy-2,3,4,5-tetrahydrodipicolinate + NADPH + H(+). The protein operates within amino-acid biosynthesis; L-lysine biosynthesis via DAP pathway; (S)-tetrahydrodipicolinate from L-aspartate: step 4/4. Its function is as follows. Catalyzes the conversion of 4-hydroxy-tetrahydrodipicolinate (HTPA) to tetrahydrodipicolinate. This chain is 4-hydroxy-tetrahydrodipicolinate reductase, found in Magnetococcus marinus (strain ATCC BAA-1437 / JCM 17883 / MC-1).